Here is a 67-residue protein sequence, read N- to C-terminus: MGEISITKLLVVAALVVLLFGTKKLRTLGGDLGAAIKGFKKAMNDEDAGAKKDANGDLPAEKLTHKE.

The helical transmembrane segment at 1–21 threads the bilayer; the sequence is MGEISITKLLVVAALVVLLFG. The disordered stretch occupies residues 45-67; that stretch reads DEDAGAKKDANGDLPAEKLTHKE.

This sequence belongs to the TatA/E family. TatE subfamily.

It is found in the cell inner membrane. In terms of biological role, part of the twin-arginine translocation (Tat) system that transports large folded proteins containing a characteristic twin-arginine motif in their signal peptide across membranes. TatE shares overlapping functions with TatA. The polypeptide is Probable Sec-independent protein translocase protein TatE (Escherichia fergusonii (strain ATCC 35469 / DSM 13698 / CCUG 18766 / IAM 14443 / JCM 21226 / LMG 7866 / NBRC 102419 / NCTC 12128 / CDC 0568-73)).